The sequence spans 734 residues: Threonine--tRNA ligase, cytoplasmic (734 aa).

Residues 1 to 41 (MSASEAGVTEQVKKLSVKDSSNDAVKPNKKENKKSKQQSLY) form a disordered region. Positions 11 to 30 (QVKKLSVKDSSNDAVKPNKK) are enriched in basic and acidic residues. Positions 69 to 135 (SMPRVPLKIV…EGEANEEIKL (67 aa)) constitute a TGS domain. 2 positions are modified to phosphoserine: S195 and S289. A phosphothreonine mark is found at T297 and T381. Phosphoserine occurs at positions 453 and 457. T460 bears the Phosphothreonine mark. Phosphoserine is present on S605.

It belongs to the class-II aminoacyl-tRNA synthetase family.

Its subcellular location is the cytoplasm. It catalyses the reaction tRNA(Thr) + L-threonine + ATP = L-threonyl-tRNA(Thr) + AMP + diphosphate + H(+). The protein is Threonine--tRNA ligase, cytoplasmic (THS1) of Saccharomyces cerevisiae (strain ATCC 204508 / S288c) (Baker's yeast).